Here is a 388-residue protein sequence, read N- to C-terminus: Chorismate synthase (388 aa).

2 residues coordinate NADP(+): Arg-39 and Arg-45. Residues 130–132 (RSS), 251–252 (NA), Gly-296, 311–315 (KPIPT), and Arg-337 contribute to the FMN site.

It belongs to the chorismate synthase family. In terms of assembly, homotetramer. Requires FMNH2 as cofactor.

It catalyses the reaction 5-O-(1-carboxyvinyl)-3-phosphoshikimate = chorismate + phosphate. Its pathway is metabolic intermediate biosynthesis; chorismate biosynthesis; chorismate from D-erythrose 4-phosphate and phosphoenolpyruvate: step 7/7. In terms of biological role, catalyzes the anti-1,4-elimination of the C-3 phosphate and the C-6 proR hydrogen from 5-enolpyruvylshikimate-3-phosphate (EPSP) to yield chorismate, which is the branch point compound that serves as the starting substrate for the three terminal pathways of aromatic amino acid biosynthesis. This reaction introduces a second double bond into the aromatic ring system. The polypeptide is Chorismate synthase (Streptococcus pyogenes serotype M12 (strain MGAS2096)).